Here is a 742-residue protein sequence, read N- to C-terminus: Hapless 2 (742 aa).

The first 19 residues, 1–19 (MKFLAFGLIYFHFCILNRC), serve as a signal peptide directing secretion. At 20-540 (EYITSSTIQK…CYFSAGCIKE (521 aa)) the chain is on the extracellular side. 7 disulfides stabilise this stretch: Cys-30-Cys-40, Cys-118-Cys-147, Cys-129-Cys-182, Cys-148-Cys-312, Cys-150-Cys-168, Cys-295-Cys-319, and Cys-431-Cys-470. Residues 152-179 (LSDILGMGNDLSRGKVCYALNLGAGSAT) are important for membrane fusion. The chain crosses the membrane as a helical span at residues 541–561 (AFKSIASIAGVASALALVIFL). At 562–742 (AKNGYLVPII…STSPLYLLIE (181 aa)) the chain is on the cytoplasmic side.

The protein belongs to the HAP2/GCS1 family.

Its subcellular location is the cell membrane. It is found in the cell junction. In terms of biological role, during fertilization, required for the formation of intercellular membrane pores and subsequent exchange of gametic pronuclei between cells. Probably initiates the formation of intercellular membrane pores by inserting part of its extracellular domain into the cell membrane of the adjoining cell in the mating pair. Mating requires the presence of HAP2 on at least one of the two cells. Mating efficiency is high when HAP2 is present on both cells, and is strongly reduced when HAP2 is present on only one of the two cells. This is Hapless 2 from Tetrahymena thermophila.